A 101-amino-acid polypeptide reads, in one-letter code: MGTRCLLVLLLVLLVLRCDVQGDDMARQDEATGPTLLSQMQESLYSYWGSAKAAAQDLYEKTYLTAVDEKIRDMYSTSTAAVRIYTGILTDQILSMLSGDS.

The first 22 residues, 1-22, serve as a signal peptide directing secretion; that stretch reads MGTRCLLVLLLVLLVLRCDVQG. A propeptide spans 23–28 (removed in mature form); that stretch reads DDMARQ. Residues 66–74 are lipid binding; the sequence is AVDEKIRDM. The tract at residues 78–101 is lipoprotein lipase cofactor; it reads STAAVRIYTGILTDQILSMLSGDS.

This sequence belongs to the apolipoprotein C2 family. In terms of processing, proapolipoprotein C-II is synthesized as a sialic acid containing glycoprotein which is subsequently desialylated prior to its proteolytic processing. Proapolipoprotein C-II, the major form found in plasma undergoes proteolytic cleavage of its N-terminal hexapeptide to generate the mature form apolipoprotein C-II, which occurs as the minor form in plasma.

It is found in the secreted. Its function is as follows. Component of chylomicrons, very low-density lipoproteins (VLDL), low-density lipoproteins (LDL), and high-density lipoproteins (HDL) in plasma. Plays an important role in lipoprotein metabolism as an activator of lipoprotein lipase, the enzyme which hydrolyzes the triacylglycerols on chylomicrons and VLDL. The polypeptide is Apolipoprotein C-II (APOC2) (Acinonyx jubatus (Cheetah)).